A 103-amino-acid chain; its full sequence is Nucleoid-associated protein BH0035 (103 aa).

Over residues 1 to 20 (MKNMGQMMKQMQKMQKQMMK) the composition is skewed to low complexity. A disordered region spans residues 1–29 (MKNMGQMMKQMQKMQKQMMKAQEELKEKT).

This sequence belongs to the YbaB/EbfC family. As to quaternary structure, homodimer.

It localises to the cytoplasm. The protein resides in the nucleoid. Its function is as follows. Binds to DNA and alters its conformation. May be involved in regulation of gene expression, nucleoid organization and DNA protection. In Halalkalibacterium halodurans (strain ATCC BAA-125 / DSM 18197 / FERM 7344 / JCM 9153 / C-125) (Bacillus halodurans), this protein is Nucleoid-associated protein BH0035.